Consider the following 309-residue polypeptide: Protein lifeguard 3 (309 aa).

2 disordered regions span residues 1 to 31 (MSNPSAPPPYEDHNPLYPGSPPPGGYGQPSV) and 64 to 84 (PMNYGHDYNEEERAGSDSFRP). Basic and acidic residues predominate over residues 70–84 (DYNEEERAGSDSFRP). Phosphoserine is present on residues Ser79 and Ser81. 7 helical membrane passes run 101-121 (YCIISVQLLITVAIIAIFTFV), 132-152 (VAVYYVSYAVFLVTYLTLACC), 163-183 (IILLTIFTLALGFVTGTISSM), 188-208 (AVIIAMIITAVVSISVTIFCF), 221-241 (FCVLGIVLMVTGIVTSIVLIF), 244-264 (IYWLHMVYAALGAICFTLFLA), and 286-306 (GALQIYTDIVYIFTFVLQLVG).

This sequence belongs to the BI1 family. LFG subfamily. As to expression, expressed in most tissues except spleen, thymus and testis.

The protein resides in the membrane. Its subcellular location is the lysosome membrane. It is found in the endosome membrane. Its function is as follows. Negatively regulates aortic matrix metalloproteinase-9 (MMP9) production and may play a protective role in vascular remodeling. In Mus musculus (Mouse), this protein is Protein lifeguard 3 (Tmbim1).